The sequence spans 153 residues: Catabolic 3-dehydroquinase (153 aa).

Tyr24 functions as the Proton acceptor in the catalytic mechanism. 3 residues coordinate substrate: Asn75, His81, and Asp88. The active-site Proton donor is His101. Residues 102 to 103 (VS) and Arg112 each bind substrate.

The protein belongs to the type-II 3-dehydroquinase family. In terms of assembly, homododecamer. Adopts a ring-like structure, composed of an arrangement of two hexameric rings stacked on top of one another.

The catalysed reaction is 3-dehydroquinate = 3-dehydroshikimate + H2O. It participates in aromatic compound metabolism; 3,4-dihydroxybenzoate biosynthesis; 3,4-dihydroxybenzoate from 3-dehydroquinate: step 1/2. Its function is as follows. Is involved in the catabolism of quinate. Allows the utilization of quinate as carbon source via the beta-ketoadipate pathway. The polypeptide is Catabolic 3-dehydroquinase (Emericella nidulans (strain FGSC A4 / ATCC 38163 / CBS 112.46 / NRRL 194 / M139) (Aspergillus nidulans)).